We begin with the raw amino-acid sequence, 209 residues long: Proteasome subunit beta (209 aa).

Positions 1-10 are cleaved as a propeptide — removed in mature form; by autocatalysis; it reads MVEQSDTMKG. Thr11 (nucleophile) is an active-site residue.

Belongs to the peptidase T1B family. The 20S proteasome core is composed of 14 alpha and 14 beta subunits that assemble into four stacked heptameric rings, resulting in a barrel-shaped structure. The two inner rings, each composed of seven catalytic beta subunits, are sandwiched by two outer rings, each composed of seven alpha subunits. The catalytic chamber with the active sites is on the inside of the barrel. Has a gated structure, the ends of the cylinder being occluded by the N-termini of the alpha-subunits. Is capped at one or both ends by the proteasome regulatory ATPase, PAN.

Its subcellular location is the cytoplasm. It catalyses the reaction Cleavage of peptide bonds with very broad specificity.. Its activity is regulated as follows. The formation of the proteasomal ATPase PAN-20S proteasome complex, via the docking of the C-termini of PAN into the intersubunit pockets in the alpha-rings, triggers opening of the gate for substrate entry. Interconversion between the open-gate and close-gate conformations leads to a dynamic regulation of the 20S proteasome proteolysis activity. Functionally, component of the proteasome core, a large protease complex with broad specificity involved in protein degradation. This chain is Proteasome subunit beta, found in Methanospirillum hungatei JF-1 (strain ATCC 27890 / DSM 864 / NBRC 100397 / JF-1).